The chain runs to 780 residues: Lethal(3)malignant brain tumor-like protein 3 (780 aa).

The interval 1–64 (MTESASSTSG…VKKATATTTW (64 aa)) is interaction with RBPJ. Required for transcription repressor activity on Notch target genes. Positions 149-220 (DKDQKEERDV…RKRRGDSAVL (72 aa)) are disordered. 2 stretches are compositionally biased toward acidic residues: residues 157–166 (DVEEDNEEED) and 185–194 (EDGEERDDEM). 3 MBT repeats span residues 232–332 (WCWA…LHPP), 340–439 (FNWQ…LITP), and 448–543 (FSWD…LQPP). The CCHHC-type; degenerate zinc-finger motif lies at 549–593 (LMEASEHGGCSTPGCKGIGHFKRARHLGPHSAANCPYSEINLNKD). Residues 597–665 (PDRLSGEMPP…GAREEPTVQQ (69 aa)) are disordered. The interval 600-710 (LSGEMPPASP…PASKVSKWST (111 aa)) is interaction with DCAF5. Phosphoserine is present on Ser-608. Lys-637 is covalently cross-linked (Glycyl lysine isopeptide (Lys-Gly) (interchain with G-Cter in SUMO2)). Over residues 643–661 (RTESEMRTSHEARGAREEP) the composition is skewed to basic and acidic residues. Lys-704 participates in a covalent cross-link: Glycyl lysine isopeptide (Lys-Gly) (interchain with G-Cter in SUMO2). The region spanning 708-772 (WSTDEVSEFI…FNSILMFKAA (65 aa)) is the SAM domain.

In terms of assembly, interacts with RNF2. Interacts (via SAM domain) with SAMD1 (via SAM domain); the interaction mediates L3MBTL3 binding to chromatin. Interacts with RBPJ; the interaction is required for L3MBTL3 localization to chromatin and is impaired by Notch-derived peptides containing the intracellular domain (NICD). Interacts (via SAM domain) with KDM1A. Interacts with DCAF5. Interacts with DNMT1. Interacts with E2F1. Interacts with SOX2. Interacts with SFMBT1.

The protein resides in the nucleus. In terms of biological role, is a negative regulator of Notch target genes expression, required for RBPJ-mediated transcriptional repression. It recruits KDM1A to Notch-responsive elements and promotes KDM1A-mediated H3K4me demethylation. Involved in the regulation of ubiquitin-dependent degradation of a set of methylated non-histone proteins, including SOX2, DNMT1 and E2F1. It acts as an adapter recruiting the CRL4-DCAF5 E3 ubiquitin ligase complex to methylated target proteins. Required for normal maturation of myeloid progenitor cells. The polypeptide is Lethal(3)malignant brain tumor-like protein 3 (Homo sapiens (Human)).